Consider the following 997-residue polypeptide: NLR family CARD domain-containing protein 4 (997 aa).

The CARD domain maps to 1 to 88; the sequence is MDLIRKNYAE…FFYEDLIGQR (88 aa). The nucleotide-binding domain (NBD) stretch occupies residues 95–300; sequence EEDLENLADH…RCGALIAETS (206 aa). Residues 165 to 478 form the NACHT domain; that stretch reads SPCVIEGEAG…VTKGEDFLNK (314 aa). 171–178 contacts ATP; it reads GEAGKGKT. Residues 358 to 465 are winged-helix domain (WHD); sequence MNTQTTLFST…RLSQLLSSED (108 aa). 12 LRR repeats span residues 550–570, 629–652, 708–731, 735–758, 760–785, 797–820, 821–843, 851–875, 884–905, 908–935, 937–958, and 972–994; these read LFSE…HIEF, NQSI…DIKY, MTEM…LLEG, LVGL…TLAE, ILSL…ESIA, ELKL…LYSL, SHIE…SVEE, LDAI…VLPT, ELAF…SYIN, FENL…ILQY, PNLT…DLVR, and TMEL…AKNM.

It is found in the cytoplasm. Its subcellular location is the cytosol. Key component of inflammasomes that indirectly senses specific proteins from pathogenic bacteria and fungi and responds by assembling an inflammasome complex that promotes caspase-1 activation, cytokine production and macrophage pyroptosis. This is NLR family CARD domain-containing protein 4 (nlrc4) from Xenopus tropicalis (Western clawed frog).